A 182-amino-acid polypeptide reads, in one-letter code: MGRSRESKGVILEELKTSLSEAQLTMVIDYQGLTVAEISNLRRKLRPTGTICKVTKNTLMGLAIAEDSGWEPMKSLLSGTSAFLLVKEDIGGAFKAYQEFKKESKKTELRGGVLKEGTKGQLLTEEQLKAIADLPSKEQLIAQVAGAINAIATKLARSINEVPASLARAVDAVARQEEKEAA.

The protein belongs to the universal ribosomal protein uL10 family. Part of the ribosomal stalk of the 50S ribosomal subunit. The N-terminus interacts with L11 and the large rRNA to form the base of the stalk. The C-terminus forms an elongated spine to which L12 dimers bind in a sequential fashion forming a multimeric L10(L12)X complex.

Forms part of the ribosomal stalk, playing a central role in the interaction of the ribosome with GTP-bound translation factors. This Microcystis aeruginosa (strain NIES-843 / IAM M-2473) protein is Large ribosomal subunit protein uL10.